The sequence spans 336 residues: Acetyl-coenzyme A carboxylase carboxyl transferase subunit beta (336 aa).

Residues 27–297 form the CoA carboxyltransferase N-terminal domain; the sequence is LWTKCESCQG…VAPAPAPAAT (271 aa). Positions 31, 34, 50, and 53 each coordinate Zn(2+). The segment at 31 to 53 adopts a C4-type zinc-finger fold; it reads CESCQGILYRPDLERNLEVCPKC. The tract at residues 287 to 336 is disordered; sequence SVAPAPAPAATVDPEPESAEPEAPAEEAGPAGAAGDQAGESQDEGDPRNA. Over residues 300-311 the composition is skewed to acidic residues; the sequence is PEPESAEPEAPA. A compositionally biased stretch (low complexity) spans 312 to 326; that stretch reads EEAGPAGAAGDQAGE.

It belongs to the AccD/PCCB family. Acetyl-CoA carboxylase is a heterohexamer composed of biotin carboxyl carrier protein (AccB), biotin carboxylase (AccC) and two subunits each of ACCase subunit alpha (AccA) and ACCase subunit beta (AccD). The cofactor is Zn(2+).

It is found in the cytoplasm. The enzyme catalyses N(6)-carboxybiotinyl-L-lysyl-[protein] + acetyl-CoA = N(6)-biotinyl-L-lysyl-[protein] + malonyl-CoA. The protein operates within lipid metabolism; malonyl-CoA biosynthesis; malonyl-CoA from acetyl-CoA: step 1/1. Component of the acetyl coenzyme A carboxylase (ACC) complex. Biotin carboxylase (BC) catalyzes the carboxylation of biotin on its carrier protein (BCCP) and then the CO(2) group is transferred by the transcarboxylase to acetyl-CoA to form malonyl-CoA. The chain is Acetyl-coenzyme A carboxylase carboxyl transferase subunit beta from Halorhodospira halophila (strain DSM 244 / SL1) (Ectothiorhodospira halophila (strain DSM 244 / SL1)).